The primary structure comprises 85 residues: Large ribosomal subunit protein bL31B (85 aa).

Belongs to the bacterial ribosomal protein bL31 family. Type B subfamily. As to quaternary structure, part of the 50S ribosomal subunit.

In Micrococcus luteus (strain ATCC 4698 / DSM 20030 / JCM 1464 / CCM 169 / CCUG 5858 / IAM 1056 / NBRC 3333 / NCIMB 9278 / NCTC 2665 / VKM Ac-2230) (Micrococcus lysodeikticus), this protein is Large ribosomal subunit protein bL31B.